A 508-amino-acid polypeptide reads, in one-letter code: Maturase K (508 aa).

The protein belongs to the intron maturase 2 family. MatK subfamily.

Its subcellular location is the plastid. It is found in the chloroplast. Its function is as follows. Usually encoded in the trnK tRNA gene intron. Probably assists in splicing its own and other chloroplast group II introns. The sequence is that of Maturase K from Cunninghamia lanceolata (China fir).